We begin with the raw amino-acid sequence, 432 residues long: Adhesin YadA (432 aa).

The signal sequence occupies residues 1–25; the sequence is MTKDFKISVSAALISALFSSPYAFA. The tract at residues 26 to 340 is surface exposed passenger domain; it reads EEPEDGNDGI…KKAISESNQY (315 aa). Positions 242–263 form a coiled coil; it reads VNVAQLKKEMAETLENARKETL. The tract at residues 341–379 is outer membrane translocation of the passenger domain; sequence TDHKFSQLDNRLDKLDKRVDKGLASSAALNSLFQPYGVG. The next 4 membrane-spanning stretches (beta stranded) occupy residues 379–389, 393–404, 411–417, and 421–432; these read GKVNFTAGVGG, SQALAIGSGYRV, KAGVAYA, and NVMYNASFNIEW. Positions 380–432 are translocator domain; sequence KVNFTAGVGGYRSSQALAIGSGYRVNESVALKAGVAYAGSSNVMYNASFNIEW.

It belongs to the autotransporter-2 (AT-2) (TC 1.B.40) family. As to quaternary structure, homotrimer.

It localises to the cell surface. It is found in the cell outer membrane. Functionally, collagen-binding outer membrane protein forming a fibrillar matrix on the bacterial cell surface. Promotes attachment to eukaryotic cells and after invasion, is the major adhesin in infected tissue. Constitutes an alternative uptake pathway under conditions in which invasin synthesis is repressed. This Yersinia pseudotuberculosis serotype I (strain IP32953) protein is Adhesin YadA (yadA).